Here is a 348-residue protein sequence, read N- to C-terminus: Chloroacetanilide N-alkylformylase, oxygenase component (348 aa).

One can recognise a Rieske domain in the interval 7–108 (WYAVAWCDEV…ARERHKLIWA (102 aa)). Residues cysteine 47, histidine 49, cysteine 66, and histidine 69 each coordinate [2Fe-2S] cluster. The Fe cation site is built by histidine 159 and histidine 164. Histidine 250 lines the substrate pocket. Aspartate 293 serves as a coordination point for Fe cation.

As to quaternary structure, the chloroacetanilide N-alkylformylase multicomponent enzyme system is composed of an oxygenase component (CndA) and an electron transfer component formed by a ferredoxin reductase (CndC1) and a ferredoxin (CndB1). In vitro, chloroacetanilide N-alkylformylase assays in which CndB1 is substituted for CndB2 demonstrate that the two enzymes possess nearly identical activities. [2Fe-2S] cluster is required as a cofactor.

It carries out the reaction butachlor + 2 reduced [2Fe-2S]-[ferredoxin] + O2 + 2 H(+) = butyl formate + N-(2,6-diethylphenyl)-2-chloroacetamide + 2 oxidized [2Fe-2S]-[ferredoxin] + H2O. The catalysed reaction is alachlor + 2 reduced [2Fe-2S]-[ferredoxin] + O2 + 2 H(+) = methyl formate + N-(2,6-diethylphenyl)-2-chloroacetamide + 2 oxidized [2Fe-2S]-[ferredoxin] + H2O. It catalyses the reaction acetochlor + 2 reduced [2Fe-2S]-[ferredoxin] + O2 + 2 H(+) = N-(2-ethyl-6-methylphenyl)-2-chloroacetamide + ethyl formate + 2 oxidized [2Fe-2S]-[ferredoxin] + H2O. Its activity is regulated as follows. Activity enhanced by Fe(2+) and Mg(2+) ions. Divalent cations such as Ca(2+), Cr(2+), Co(2+), and Mn(2+) show moderate inhibition of the enzyme, whereas heavy metal ions such as Ag(+), Cu(2+), Pb(2+), Hg(2+), Ni(2+) and Zn(2+) severely inhibit the activity. In terms of biological role, component of the chloroacetanilide N-alkylformylase multicomponent enzyme system involved in the degradation of chloroacetanilide herbicides (N-alkoxyalkyl-N-chloroacetyl-substituted aniline derivatives). In vitro, catalyzes the N-dealkylation of butachlor, alachlor and acetochlor to yield 2-chloro-N-(2,6-diethylphenyl)acetamide (CDEPA) (for alachlor and butachlor) and 2-chloro-N-(2-methyl-6-ethylphenyl)acetamide (CMEPA) (for acetochlor). This Rhizorhabdus wittichii (strain DC-6 / KACC 16600) (Sphingomonas wittichii) protein is Chloroacetanilide N-alkylformylase, oxygenase component.